We begin with the raw amino-acid sequence, 452 residues long: Pup--protein ligase 1 (452 aa).

E9 lines the Mg(2+) pocket. Residue R53 participates in ATP binding. Y55 contacts Mg(2+). D57 serves as the catalytic Proton acceptor. Position 63 (E63) interacts with Mg(2+). ATP-binding residues include T66 and W419.

It belongs to the Pup ligase/Pup deamidase family. Pup-conjugating enzyme subfamily.

It catalyses the reaction ATP + [prokaryotic ubiquitin-like protein]-L-glutamate + [protein]-L-lysine = ADP + phosphate + N(6)-([prokaryotic ubiquitin-like protein]-gamma-L-glutamyl)-[protein]-L-lysine.. The protein operates within protein degradation; proteasomal Pup-dependent pathway. Its pathway is protein modification; protein pupylation. Functionally, catalyzes the covalent attachment of the prokaryotic ubiquitin-like protein modifier Pup to the proteasomal substrate proteins, thereby targeting them for proteasomal degradation. This tagging system is termed pupylation. The ligation reaction involves the side-chain carboxylate of the C-terminal glutamate of Pup and the side-chain amino group of a substrate lysine. The sequence is that of Pup--protein ligase 1 from Rhodococcus erythropolis (Arthrobacter picolinophilus).